The primary structure comprises 387 residues: 1-deoxy-D-xylulose 5-phosphate reductoisomerase (387 aa).

NADPH contacts are provided by Thr-11, Gly-12, Ser-13, Ile-14, Gly-37, Arg-39, and Asn-123. Lys-124 is a binding site for 1-deoxy-D-xylulose 5-phosphate. Glu-125 lines the NADPH pocket. Position 147 (Asp-147) interacts with Mn(2+). 1-deoxy-D-xylulose 5-phosphate contacts are provided by Ser-148, Glu-149, Ser-173, and His-196. Residue Glu-149 participates in Mn(2+) binding. NADPH is bound at residue Gly-202. Positions 209, 214, 215, and 218 each coordinate 1-deoxy-D-xylulose 5-phosphate. Glu-218 contacts Mn(2+).

Belongs to the DXR family. Mg(2+) is required as a cofactor. The cofactor is Mn(2+).

The enzyme catalyses 2-C-methyl-D-erythritol 4-phosphate + NADP(+) = 1-deoxy-D-xylulose 5-phosphate + NADPH + H(+). The protein operates within isoprenoid biosynthesis; isopentenyl diphosphate biosynthesis via DXP pathway; isopentenyl diphosphate from 1-deoxy-D-xylulose 5-phosphate: step 1/6. Functionally, catalyzes the NADPH-dependent rearrangement and reduction of 1-deoxy-D-xylulose-5-phosphate (DXP) to 2-C-methyl-D-erythritol 4-phosphate (MEP). The polypeptide is 1-deoxy-D-xylulose 5-phosphate reductoisomerase (Corynebacterium diphtheriae (strain ATCC 700971 / NCTC 13129 / Biotype gravis)).